A 198-amino-acid chain; its full sequence is HTH-type transcriptional repressor DhaR (198 aa).

The 61-residue stretch at 4 to 64 folds into the HTH tetR-type domain; sequence TPVRQHLVEK…QVLQEFFSDL (61 aa).

In terms of biological role, transcriptional repressor for the dhaA haloalkane dehalogenase gene. The chain is HTH-type transcriptional repressor DhaR (dhaR) from Mycobacterium sp. (strain GP1).